Reading from the N-terminus, the 427-residue chain is Protein phosphatase methylesterase 1 (427 aa).

The interval 1–49 (MSELQKSFAKAKLAKLPPEAPPFSMHPPRDEDDSESASSTGTVVPSPSR) is disordered. Polar residues predominate over residues 36–49 (SASSTGTVVPSPSR). Residues Ser207, Asp233, and His364 contribute to the active site. The tract at residues 402 to 427 (SAAMKQGAEAGAVPPFGRGQGSSHKP) is disordered.

Belongs to the AB hydrolase superfamily.

It catalyses the reaction [phosphatase 2A protein]-C-terminal L-leucine methyl ester + H2O = [phosphatase 2A protein]-C-terminal L-leucine + methanol + H(+). In terms of biological role, demethylates proteins that have been reversibly carboxymethylated. Demethylates the phosphatase PP2A catalytic subunit. The chain is Protein phosphatase methylesterase 1 (ppe1) from Aspergillus oryzae (strain ATCC 42149 / RIB 40) (Yellow koji mold).